The chain runs to 414 residues: 3-oxo-tetronate kinase (414 aa).

ATP is bound by residues serine 255, 355–358 (GGET), and glycine 398.

The protein belongs to the four-carbon acid sugar kinase family.

It catalyses the reaction 3-dehydro-L-erythronate + ATP = 3-dehydro-4-O-phospho-L-erythronate + ADP + H(+). The enzyme catalyses 3-dehydro-D-erythronate + ATP = 3-dehydro-4-O-phospho-D-erythronate + ADP + H(+). Its function is as follows. Catalyzes the ATP-dependent phosphorylation of 3-oxo-tetronate to 3-oxo-tetronate 4-phosphate. This chain is 3-oxo-tetronate kinase, found in Actinobacillus succinogenes (strain ATCC 55618 / DSM 22257 / CCUG 43843 / 130Z).